Consider the following 745-residue polypeptide: Cullin-2 (745 aa).

Lysine 393 is subject to N6-acetyllysine. Phosphothreonine is present on threonine 661. The Cullin neddylation domain occupies 675–735 (DRKMYLQAAI…IDKQYIERSQ (61 aa)). Lysine 689 is covalently cross-linked (Glycyl lysine isopeptide (Lys-Gly) (interchain with G-Cter in NEDD8)).

This sequence belongs to the cullin family. In terms of assembly, component of multiple Cul2-RING (CRL2) E3 ubiquitin-protein ligase complexes consisting of CUL2, Elongin BC (ELOB and ELOC), RBX1 and a variable substrate-specific adapter; this complex is also known as ECS (Elongin BC-CUL2/5-SOCS-box protein) complex and may consist of CUL2 or CUL5. Component of the ECS(VHL) or CBC(VHL) complex containing CUL2, RBX1, ELOB, ELOC and VHL. Component of the ECS(MED8) complex with the probable substrate recognition component MED8. Component of multiple ECS complexes part of the DesCEND (destruction via C-end degrons) pathway, which contain either KLHDC2, KLHDC3, KLHDC10, APPBP2, FEM1A, FEM1B or FEM1C as substrate-recognition component. Component of the ECS(LRR1) complex with the substrate recognition component LRR1. Component of a CRL2(FEM1B) complex containing CUL2, RBX1, ELOB, ELOC and FEM1B. Component of a CRL2(FEM1C) complex containing CUL2, RBX1, ELOB, ELOC and FEM1C. Part of an E3 ubiquitin-protein ligase complex including ZYG11B, CUL2 and Elongin BC. Part of an E3 ubiquitin-protein ligase complex including ZER1, CUL2 and Elongin BC. Interacts with RBX1, RNF7, FEM1B and TIP120A/CAND1. Found in a complex composed of LIMD1, VHL, EGLN1/PHD2, ELOB and CUL2. Interacts (when neddylated) with ARIH1; leading to activate the E3 ligase activity of ARIH1. Interacts (unneddylated form) with DCUN1D1, DCUN1D2, DCUN1D3, DCUN1D4 and DCUN1D5; these interactions promote the cullin neddylation. Component of VCB (elongins BC/CUL2/VHL) complex that contains at least DCUN1D1, CUL2 and VHL; this complex triggers CUL2 neddylation and consequently cullin ring ligase (CRL) substrates polyubiquitylation. Post-translationally, neddylated; which enhances the ubiquitination activity of ECS (Elongin BC-CUL2/5-SOCS-box protein) E3 ubiquitin-protein ligase complexes. Neddylation leads to structural rearrangment in the complex that allows interaction between the E2 ubiquitin-conjugating enzyme and the acceptor ubiquitin. CBC(VHL) complex formation seems to promote neddylation. Deneddylated via its interaction with the COP9 signalosome (CSN) complex.

Its subcellular location is the nucleus. Its pathway is protein modification; protein ubiquitination. In terms of biological role, core component of multiple cullin-RING-based ECS (ElonginB/C-CUL2/5-SOCS-box protein) E3 ubiquitin-protein ligase complexes, which mediate the ubiquitination of target proteins. CUL2 may serve as a rigid scaffold in the complex and may contribute to catalysis through positioning of the substrate and the ubiquitin-conjugating enzyme. The E3 ubiquitin-protein ligase activity of the complex is dependent on the neddylation of the cullin subunit and is inhibited by the association of the deneddylated cullin subunit with TIP120A/CAND1. The functional specificity of the ECS complex depends on the substrate recognition component. ECS(VHL) mediates the ubiquitination of hypoxia-inducible factor (HIF). A number of ECS complexes (containing either KLHDC2, KLHDC3, KLHDC10, APPBP2, FEM1A, FEM1B or FEM1C as substrate-recognition component) are part of the DesCEND (destruction via C-end degrons) pathway, which recognizes a C-degron located at the extreme C terminus of target proteins, leading to their ubiquitination and degradation. ECS complexes and ARIH1 collaborate in tandem to mediate ubiquitination of target proteins. ECS(LRR1) ubiquitinates MCM7 and promotes CMG replisome disassembly by VCP and chromatin extraction during S-phase. The polypeptide is Cullin-2 (CUL2) (Pongo abelii (Sumatran orangutan)).